Here is a 144-residue protein sequence, read N- to C-terminus: Protection of telomeres protein 1c (144 aa).

Belongs to the telombin family. As to expression, expressed at extremely low levels at the limit of detection.

The protein resides in the nucleus. Its subcellular location is the chromosome. It localises to the telomere. In terms of biological role, binds specifically single-stranded telomeric DNA with weak affinity. Has probably no function in the regulation of telomere length. This Arabidopsis thaliana (Mouse-ear cress) protein is Protection of telomeres protein 1c.